The sequence spans 1042 residues: Exosome RNA helicase MTR4 (1042 aa).

Ala2 carries the post-translational modification N-acetylalanine. The tract at residues 16-74 (DSTTAAGTKKDKEKDKGKWKGPPGSADKAGKRFDGKLQSESTNNGKNKRDVDFEGTDEP) is disordered. Over residues 23–33 (TKKDKEKDKGK) the composition is skewed to basic and acidic residues. Residue Lys24 forms a Glycyl lysine isopeptide (Lys-Gly) (interchain with G-Cter in SUMO2) linkage. Position 40 is a phosphoserine (Ser40). Residues 43 to 52 (KAGKRFDGKL) are compositionally biased toward basic and acidic residues. N6-acetyllysine occurs at positions 51 and 78. ATP is bound by residues Ile139, 161-168 (AHTSAGKT), Ser164, Gly166, Lys167, and Thr168. Residues 148 to 304 (IQCVDNNQSV…WICHLHKQPC (157 aa)) enclose the Helicase ATP-binding domain. Positions 252–255 (DEIH) match the DEIH box motif. A Glycyl lysine isopeptide (Lys-Gly) (interchain with G-Cter in SUMO2) cross-link involves residue Lys358. In terms of domain architecture, Helicase C-terminal spans 405-577 (QMTKLDFNTD…NMVLNLLRVE (173 aa)). Glycyl lysine isopeptide (Lys-Gly) (interchain with G-Cter in SUMO2) cross-links involve residues Lys684 and Lys723.

Belongs to the helicase family. SKI2 subfamily. In terms of assembly, component of a TRAMP-like complex, an ATP-dependent exosome regulatory complex consisting of a helicase (MTREX), an oligadenylate polymerase (TENT4B or TENT4A), and a substrate specific RNA-binding factor (ZCCHC7 or ZCCHC8). Several TRAMP-like complexes exist with specific compositions and are associated with nuclear, or nucleolar RNA exosomes. Identified in the spliceosome C complex. Component of the poly(A) tail exosome targeting (PAXT) complex made of PABPN1, ZFC3H1 and MTREX that directs a subset of long and polyadenylated poly(A) RNAs for exosomal degradation. Component of the nuclear exosome targeting (NEXT) complex composed of MTREX, ZCCHC8, and RBM7 that directs a subset of non-coding short-lived RNAs for exosomal degradation. Interacts with ZCCHC8; this interaction bridges the interaction between RBM7 and MTREX. Binds to ZFC3H1 and RBM7 in a RNase-insensitive manner. Interacts with EXOSC10; the interaction mediates the association of MTREX with nuclear RNA exosomes. Interacts with isoform 1 of NVL in an ATP-dependent manner; the interaction is required to associate NVL with nuclear RNA exosome. Interacts with WDR74; the interaction dissociation in a late stage of rRNA synthesis is required for appropriate maturation of pre-60S particles and depends on the ATPase activity of NVL. Interacts with MPHOSPH6. Interacts with the RNA cap-binding complex proteins NCBP1 and SRRT. Interacts with NRDE2; the interaction is direct and negatively regulates MTREX function in exosomal degradation by changing its conformation precluding interaction with ZFC3H1, the RNA cap-binding complex proteins NCBP1 and SRRT, and association with the exosome. Associates with the RNA exosome complex.

The protein resides in the nucleus. The protein localises to the nucleoplasm. Its subcellular location is the nucleolus. It localises to the nucleus speckle. It catalyses the reaction ATP + H2O = ADP + phosphate + H(+). Its activity is regulated as follows. Activated when MTREX is incorporated into NEXT complex an the nuclear RNA exosome complex. Functionally, catalyzes the ATP-dependent unwinding of RNA duplexes with a single-stranded 3' RNA extension. Central subunit of many protein complexes, namely TRAMP-like, nuclear exosome targeting (NEXT) and poly(A) tail exosome targeting (PAXT). NEXT functions as an RNA exosome cofactor that directs a subset of non-coding short-lived RNAs for exosomal degradation. NEXT is involved in surveillance and turnover of aberrant transcripts and non-coding RNAs. PAXT directs a subset of long and polyadenylated poly(A) RNAs for exosomal degradation. The RNA exosome is fundamental for the degradation of RNA in eukaryotic nuclei. Substrate targeting is facilitated by its cofactor ZCCHC8, which links to RNA-binding protein adapters. Associated with the RNA exosome complex and involved in the 3'-processing of the 7S pre-RNA to the mature 5.8S rRNA. May be involved in pre-mRNA splicing. In the context of NEXT complex can also in vitro unwind DNA:RNA heteroduplexes with a 3' poly (A) RNA tracking strand. Can promote unwinding and degradation of structured RNA substrates when associated with the nuclear exosome and its cofactors. Can displace a DNA strand while translocating on RNA to ultimately degrade the RNA within a DNA/RNA heteroduplex. Plays a role in DNA damage response. This Homo sapiens (Human) protein is Exosome RNA helicase MTR4.